A 67-amino-acid polypeptide reads, in one-letter code: Alpha-conotoxin-like Qc1.1a (67 aa).

The N-terminal stretch at 1 to 21 (MGMRMMFTMFLLVVLAITVVS) is a signal peptide. The propeptide occupies 22 to 46 (FTSDHASDGRNTAANDKASNLMALR). Intrachain disulfides connect Cys49–Cys55 and Cys50–Cys63. The interval 51-53 (PDP) is lacks the Ser-Xaa-Pro motif that is crucial for potent interaction with nAChR.

It belongs to the conotoxin A superfamily. As to expression, expressed by the venom duct.

It localises to the secreted. Alpha-conotoxins act on postsynaptic membranes, they bind to the nicotinic acetylcholine receptors (nAChR) and thus inhibit them. Has possibly a distinct nAChR binding mode from other alpha-conotoxins, due to a different three residue motif (lacks the Ser-Xaa-Pro motif). The polypeptide is Alpha-conotoxin-like Qc1.1a (Conus quercinus (Oak cone)).